The chain runs to 705 residues: Calpain-1 catalytic subunit (705 aa).

In terms of domain architecture, Calpain catalytic spans 48-347 (LFRDPQFPAG…FSRLEICNLT (300 aa)). Active-site residues include cysteine 108, histidine 265, and asparagine 289. The segment at 348 to 517 (PDALTKDELS…KQSDTAELDE (170 aa)) is domain III. Residues 518 to 533 (EISADLADEEEITEDD) are linker. Positions 530-565 (TEDDIEDGFKNMFQQLAGEDMEISVFELKTILNRVI) constitute an EF-hand 1 domain. The interval 534–704 (IEDGFKNMFQ…LAEWLLLTMC (171 aa)) is domain IV. Ca(2+)-binding residues include aspartate 549, glutamate 551, glutamate 556, aspartate 589, aspartate 591, serine 593, arginine 595, glutamate 600, aspartate 619, aspartate 621, serine 623, threonine 625, and glutamate 630. EF-hand domains follow at residues 606–641 (NKIR…AGFK) and 671–705 (VKLE…TMCG).

It belongs to the peptidase C2 family. In terms of assembly, heterodimer of large (catalytic) and a small (regulatory) subunit. It depends on Ca(2+) as a cofactor. The N-terminus is blocked. As to expression, ubiquitously expressed.

It localises to the cytoplasm. It is found in the cell membrane. The enzyme catalyses Broad endopeptidase specificity.. Activated by micromolar concentrations of calcium and inhibited by calpastatin. Calcium-regulated non-lysosomal thiol-protease which catalyze limited proteolysis of substrates involved in cytoskeletal remodeling and signal transduction. This is Calpain-1 catalytic subunit from Gallus gallus (Chicken).